The chain runs to 244 residues: 7-cyano-7-deazaguanine synthase (244 aa).

14–24 (FSGGQDSATCV) provides a ligand contact to ATP. The Zn(2+) site is built by Cys-202, Cys-217, Cys-220, and Cys-223.

This sequence belongs to the QueC family. Zn(2+) is required as a cofactor.

The enzyme catalyses 7-carboxy-7-deazaguanine + NH4(+) + ATP = 7-cyano-7-deazaguanine + ADP + phosphate + H2O + H(+). It functions in the pathway purine metabolism; 7-cyano-7-deazaguanine biosynthesis. Functionally, catalyzes the ATP-dependent conversion of 7-carboxy-7-deazaguanine (CDG) to 7-cyano-7-deazaguanine (preQ(0)). This is 7-cyano-7-deazaguanine synthase from Burkholderia mallei (strain NCTC 10229).